A 437-amino-acid polypeptide reads, in one-letter code: Dolichyl-diphosphooligosaccharide--protein glycosyltransferase 48 kDa subunit (437 aa).

A signal peptide spans M1 to A24. Residues G25–Y407 are Lumenal-facing. A helical membrane pass occupies residues P408 to L428. Residues H429–D437 lie on the Cytoplasmic side of the membrane.

Belongs to the DDOST 48 kDa subunit family. In terms of assembly, component of the oligosaccharyltransferase (OST) complex.

The protein localises to the endoplasmic reticulum membrane. It participates in protein modification; protein glycosylation. Its function is as follows. Subunit of the oligosaccharyl transferase (OST) complex that catalyzes the initial transfer of a defined glycan (Glc(3)Man(9)GlcNAc(2) in eukaryotes) from the lipid carrier dolichol-pyrophosphate to an asparagine residue within an Asn-X-Ser/Thr consensus motif in nascent polypeptide chains, the first step in protein N-glycosylation. N-glycosylation occurs cotranslationally and the complex associates with the Sec61 complex at the channel-forming translocon complex that mediates protein translocation across the endoplasmic reticulum (ER). All subunits are required for a maximal enzyme activity. Required for the assembly of both SST3A- and SS3B-containing OST complexes. The polypeptide is Dolichyl-diphosphooligosaccharide--protein glycosyltransferase 48 kDa subunit (Xenopus tropicalis (Western clawed frog)).